A 175-amino-acid chain; its full sequence is Respiratory supercomplex factor 1-B, mitochondrial (175 aa).

Residues 3 to 94 (DQADVLADPD…TERKQRREFE (92 aa)) enclose the HIG1 domain. Helical transmembrane passes span 30–46 (PLIP…LYRA) and 66–83 (IYAQ…GMYY). Residues 83-115 (YKTERKQRREFEKKVEERKAQEKRDAWLRELEA) are a coiled coil.

This sequence belongs to the RCF1 family. In terms of assembly, associates with the respiratory chain complex III/complex IV supercomplex.

It is found in the mitochondrion membrane. Functionally, cytochrome c oxidase subunit which plays a role in assembly of respiratory supercomplexes. The sequence is that of Respiratory supercomplex factor 1-B, mitochondrial (rcf1-B) from Talaromyces marneffei (strain ATCC 18224 / CBS 334.59 / QM 7333) (Penicillium marneffei).